The chain runs to 453 residues: Bifunctional protein GlmU (453 aa).

Residues 1-225 (MNIVILAAGT…EWETLGVNSK (225 aa)) form a pyrophosphorylase region. UDP-N-acetyl-alpha-D-glucosamine is bound by residues 6–9 (LAAG), lysine 20, glutamine 71, 76–77 (GT), 98–100 (YGD), glycine 135, glutamate 150, asparagine 165, and asparagine 223. Residue aspartate 100 coordinates Mg(2+). Mg(2+) is bound at residue asparagine 223. The tract at residues 226–246 (AQLAELERIHQRNVADALLVD) is linker. Residues 247–453 (GVTLADPARV…GYVRPVKKKS (207 aa)) are N-acetyltransferase. Positions 329 and 347 each coordinate UDP-N-acetyl-alpha-D-glucosamine. Catalysis depends on histidine 359, which acts as the Proton acceptor. Residues tyrosine 362 and asparagine 373 each coordinate UDP-N-acetyl-alpha-D-glucosamine. Acetyl-CoA is bound by residues alanine 376, 382–383 (NY), serine 401, and alanine 419.

This sequence in the N-terminal section; belongs to the N-acetylglucosamine-1-phosphate uridyltransferase family. The protein in the C-terminal section; belongs to the transferase hexapeptide repeat family. In terms of assembly, homotrimer. Requires Mg(2+) as cofactor.

Its subcellular location is the cytoplasm. It carries out the reaction alpha-D-glucosamine 1-phosphate + acetyl-CoA = N-acetyl-alpha-D-glucosamine 1-phosphate + CoA + H(+). It catalyses the reaction N-acetyl-alpha-D-glucosamine 1-phosphate + UTP + H(+) = UDP-N-acetyl-alpha-D-glucosamine + diphosphate. Its pathway is nucleotide-sugar biosynthesis; UDP-N-acetyl-alpha-D-glucosamine biosynthesis; N-acetyl-alpha-D-glucosamine 1-phosphate from alpha-D-glucosamine 6-phosphate (route II): step 2/2. It functions in the pathway nucleotide-sugar biosynthesis; UDP-N-acetyl-alpha-D-glucosamine biosynthesis; UDP-N-acetyl-alpha-D-glucosamine from N-acetyl-alpha-D-glucosamine 1-phosphate: step 1/1. The protein operates within bacterial outer membrane biogenesis; LPS lipid A biosynthesis. Catalyzes the last two sequential reactions in the de novo biosynthetic pathway for UDP-N-acetylglucosamine (UDP-GlcNAc). The C-terminal domain catalyzes the transfer of acetyl group from acetyl coenzyme A to glucosamine-1-phosphate (GlcN-1-P) to produce N-acetylglucosamine-1-phosphate (GlcNAc-1-P), which is converted into UDP-GlcNAc by the transfer of uridine 5-monophosphate (from uridine 5-triphosphate), a reaction catalyzed by the N-terminal domain. This is Bifunctional protein GlmU from Burkholderia orbicola (strain AU 1054).